Here is a 403-residue protein sequence, read N- to C-terminus: Phosphoglycerate kinase (403 aa).

Residues 22 to 24 (DLN), arginine 37, 60 to 63 (HLGR), arginine 119, and arginine 156 contribute to the substrate site. ATP-binding positions include lysine 206, glycine 302, glutamate 333, and 359 to 362 (GGDS).

Belongs to the phosphoglycerate kinase family. In terms of assembly, monomer.

Its subcellular location is the cytoplasm. The enzyme catalyses (2R)-3-phosphoglycerate + ATP = (2R)-3-phospho-glyceroyl phosphate + ADP. It participates in carbohydrate degradation; glycolysis; pyruvate from D-glyceraldehyde 3-phosphate: step 2/5. In Streptomyces griseus subsp. griseus (strain JCM 4626 / CBS 651.72 / NBRC 13350 / KCC S-0626 / ISP 5235), this protein is Phosphoglycerate kinase.